The primary structure comprises 91 residues: Small ribosomal subunit protein uS19 (91 aa).

This sequence belongs to the universal ribosomal protein uS19 family.

In terms of biological role, protein S19 forms a complex with S13 that binds strongly to the 16S ribosomal RNA. The polypeptide is Small ribosomal subunit protein uS19 (Exiguobacterium sp. (strain ATCC BAA-1283 / AT1b)).